Consider the following 646-residue polypeptide: MSLPKKKIGIFAFFLLTVFTITLKTYFSYYVDFSLGVKGLVQNLILIMNPYSLIALVLSVFLFFKGKKAFWFIFIGGFLLTFLLYANVVYFRFFSDFLTFSTLNQAGNVESMGGAVSASFKWYDFVYFIDTIIYLAILIFKRKWLDNRAFSKKFVPVVMATSVALFFLNLAFAETDRPELLTRTFDHKYLVKYLGPYNFTVYDGVKTIENNQQKALASEDDLTKVLNYTKQKRTEPNPEYYGAAKKKNIIKIHLESFQTFLINKKVNGKEVTPFLNKLSSGNQDFTYFPNFFHQTGQGKTSDSEFTMDNSLYGLPQGSAYSLKGDNTYQSLPAILDQKQGYTSNVMHGDYKTFWNRDQVYKHFGIDNFYDATYYDMSDDNIVNLGLKDKPFFKASADYQSKMKKPFYSHLITLTNHYPFTLDEEDASIDKPNTGDSTVDGYIQTAHYLDQALEEYITDLKKKGLYDNSVIMIYGDHYGISENHNNAMEKLLGEKITPAKFTDLNRTGFWLKVPGKSGGVNKEYAGQMDVMPTLLHLVGIDSKNYLMFGSDMFSKQHNNVVPFRNGDFITEDYKYVNGKIYSNKDNELLTEKPKDFDKNKKQVEKDLEMSDSVLNGDLFRFYKNPDFKKVNPGKYEYKSGPKGNEKK.

The Cytoplasmic segment spans residues methionine 1 to lysine 7. A helical membrane pass occupies residues isoleucine 8–serine 28. The Extracellular segment spans residues tyrosine 29 to asparagine 43. The helical transmembrane segment at leucine 44–phenylalanine 64 threads the bilayer. Residues lysine 65–lysine 68 lie on the Cytoplasmic side of the membrane. A helical transmembrane segment spans residues alanine 69–valine 89. Topologically, residues tyrosine 90–serine 119 are extracellular. A helical transmembrane segment spans residues phenylalanine 120–phenylalanine 140. At lysine 141–lysine 153 the chain is on the cytoplasmic side. The chain crosses the membrane as a helical span at residues phenylalanine 154–glutamate 174. The Extracellular portion of the chain corresponds to threonine 175–lysine 646. Mn(2+) contacts are provided by glutamate 255 and threonine 300. Threonine 300 is a catalytic residue. Position 416 (histidine 416) interacts with substrate. Aspartate 475 and histidine 476 together coordinate Mn(2+).

Belongs to the LTA synthase family. In terms of processing, proteolytically cleaved.

It localises to the cell membrane. Its subcellular location is the secreted. Its pathway is cell wall biogenesis; lipoteichoic acid biosynthesis. Catalyzes the polymerization of lipoteichoic acid (LTA) polyglycerol phosphate, a reaction that presumably uses phosphatidylglycerol (PG) as substrate. Is required for staphylococcal growth and cell division process. The protein is Lipoteichoic acid synthase (ltaS) of Staphylococcus epidermidis (strain ATCC 12228 / FDA PCI 1200).